A 387-amino-acid polypeptide reads, in one-letter code: Radial spoke protein 14 (387 aa).

ARM repeat units follow at residues K24–S67, P69–A109, E111–R150, T154–Q198, G204–T244, R245–I286, E289–E328, and P330–F370.

It belongs to the flagellar radial spoke RSP14 family.

The protein resides in the cytoplasm. It is found in the cytoskeleton. The protein localises to the flagellum axoneme. The sequence is that of Radial spoke protein 14 (RSP14) from Chlamydomonas reinhardtii (Chlamydomonas smithii).